Reading from the N-terminus, the 96-residue chain is UPF0235 protein VV1_1522 (96 aa).

This sequence belongs to the UPF0235 family.

The protein is UPF0235 protein VV1_1522 of Vibrio vulnificus (strain CMCP6).